A 201-amino-acid polypeptide reads, in one-letter code: dTTP/UTP pyrophosphatase (201 aa).

Asp-80 serves as the catalytic Proton acceptor.

Belongs to the Maf family. YhdE subfamily. Requires a divalent metal cation as cofactor.

It is found in the cytoplasm. It carries out the reaction dTTP + H2O = dTMP + diphosphate + H(+). It catalyses the reaction UTP + H2O = UMP + diphosphate + H(+). In terms of biological role, nucleoside triphosphate pyrophosphatase that hydrolyzes dTTP and UTP. May have a dual role in cell division arrest and in preventing the incorporation of modified nucleotides into cellular nucleic acids. The polypeptide is dTTP/UTP pyrophosphatase (Novosphingobium aromaticivorans (strain ATCC 700278 / DSM 12444 / CCUG 56034 / CIP 105152 / NBRC 16084 / F199)).